The sequence spans 237 residues: Small ribosomal subunit protein uS3 (237 aa).

In terms of domain architecture, KH type-2 spans 17–86 (VERHLGHELK…SPQIEVQQVD (70 aa)).

This sequence belongs to the universal ribosomal protein uS3 family. Part of the 30S ribosomal subunit.

Binds the lower part of the 30S subunit head. The chain is Small ribosomal subunit protein uS3 from Methanospirillum hungatei JF-1 (strain ATCC 27890 / DSM 864 / NBRC 100397 / JF-1).